A 229-amino-acid chain; its full sequence is Acidic leucine-rich nuclear phosphoprotein 32-related protein 1 (229 aa).

LRR repeat units lie at residues 19 to 40 (TVDT…TDQL), 42 to 63 (NLEM…PTLP), 64 to 85 (ALTY…DVLV), and 90 to 110 (DLKK…RCLK). The 41-residue stretch at 124-164 (PSLGLLEDYREKMFEMIPSLKILDGCDVDGEEVEEEFAGEG) folds into the LRRCT domain. Acidic residues predominate over residues 155–177 (EVEEEFAGEGGEDSEEGSGDEDG). Positions 155-229 (EVEEEFAGEG…DNKKAAGDDE (75 aa)) are disordered. Residues 219–229 (PDNKKAAGDDE) show a composition bias toward basic and acidic residues.

Belongs to the ANP32 family.

The protein is Acidic leucine-rich nuclear phosphoprotein 32-related protein 1 of Caenorhabditis elegans.